Here is a 1793-residue protein sequence, read N- to C-terminus: Non-reducing polyketide synthase adaA (1793 aa).

The N-terminal acylcarrier protein transacylase domain (SAT) stretch occupies residues 16 to 250; sequence NDDLKALFRG…YSKSLALPVY (235 aa). Positions 388–821 constitute a Ketosynthase family 3 (KS3) domain; that stretch reads DSKLAIVGMA…GGNTTLVLED (434 aa). Active-site for beta-ketoacyl synthase activity residues include Cys561, His696, and His739. Positions 923–1245 are malonyl-CoA:ACP transacylase (MAT) domain; that stretch reads VFTFTGQGAY…KSLCTLHLAG (323 aa). A product template (PT) domain region spans residues 1312-1634; the sequence is TSLIHQVTEE…RLLMDRFFSP (323 aa). Residues 1316–1452 form an N-terminal hotdog fold region; sequence HQVTEETVDK…GSIKYPADPT (137 aa). One can recognise a PKS/mFAS DH domain in the interval 1316-1629; it reads HQVTEETVDK…FRRVPRLLMD (314 aa). Catalysis depends on His1348, which acts as the Proton acceptor; for dehydratase activity. The segment at 1482 to 1629 is C-terminal hotdog fold; it reads KASTLSKPLA…FRRVPRLLMD (148 aa). Residue Asp1540 is the Proton donor; for dehydratase activity of the active site. Residues 1642 to 1659 show a composition bias toward low complexity; the sequence is AAPAPAPAAVPAVKKQPP. A disordered region spans residues 1642 to 1714; it reads AAPAPAPAAV…TTEQEAPVAD (73 aa). Positions 1660-1681 are enriched in polar residues; the sequence is TETIQPQAPKTEQKQDQLQLPN. Low complexity predominate over residues 1683–1706; that stretch reads ASAAPSTANSSSSPSSSGVATPTT. In terms of domain architecture, Carrier spans 1716 to 1793; sequence SAVTGVAGKC…DLTGWLEQYC (78 aa). An O-(pantetheine 4'-phosphoryl)serine modification is found at Ser1753.

Pantetheine 4'-phosphate is required as a cofactor.

It catalyses the reaction holo-[ACP] + 9 malonyl-CoA + acetyl-CoA + 9 H(+) = 3-(2,4-dioxopentyl)-3,6,8,9-tetrahydroxy-1-oxo-1,2,3,4-tetrahydroanthracene-2-carboxyl-[ACP] + 9 CO2 + 10 CoA + 2 H2O. Its pathway is secondary metabolite biosynthesis. Functionally, non-reducing polyketide synthase; part of the gene cluster that mediates the biosynthesis of the linear tetracyclic TAN-1612 neuropeptide Y receptor antagonist. The decaketide backbone of TAN-1612 is synthesized by the non-reducing polyketide synthase adaA via condensation of one acetyl-CoA starter unit with 9 malonyl-CoA units. The FAD-dependent monooxygenase adaC then performs hydroxylation at C2 while the polaketide chain is still attached to the NRPKS adaA. The alpha-hydroxylation step at C2 appears to be crucial for the following C18-C1 Claisen cyclization and release of the C9-hydroxyl version of TAN-1612 from the NRPKS adaA, two steps performed by the lactamase-like protein adaB. Finally, the O-methyltransferase adaD performs the C9 O-methylation to complete the biosynthesis of TAN-1612. The sequence is that of Non-reducing polyketide synthase adaA from Aspergillus niger (strain ATCC MYA-4892 / CBS 513.88 / FGSC A1513).